A 397-amino-acid polypeptide reads, in one-letter code: Cysteine desulfurase IscS (397 aa).

Residues 72-73 (GS), asparagine 152, glutamine 180, and 200-202 (SAH) contribute to the pyridoxal 5'-phosphate site. The residue at position 203 (lysine 203) is an N6-(pyridoxal phosphate)lysine. Position 238 (threonine 238) interacts with pyridoxal 5'-phosphate. Cysteine 328 (cysteine persulfide intermediate) is an active-site residue. [2Fe-2S] cluster is bound at residue cysteine 328.

Belongs to the class-V pyridoxal-phosphate-dependent aminotransferase family. NifS/IscS subfamily. As to quaternary structure, homodimer. Forms a heterotetramer with IscU, interacts with other sulfur acceptors. Pyridoxal 5'-phosphate serves as cofactor.

It localises to the cytoplasm. The enzyme catalyses (sulfur carrier)-H + L-cysteine = (sulfur carrier)-SH + L-alanine. The protein operates within cofactor biosynthesis; iron-sulfur cluster biosynthesis. Functionally, master enzyme that delivers sulfur to a number of partners involved in Fe-S cluster assembly, tRNA modification or cofactor biosynthesis. Catalyzes the removal of elemental sulfur atoms from cysteine to produce alanine. Functions as a sulfur delivery protein for Fe-S cluster synthesis onto IscU, an Fe-S scaffold assembly protein, as well as other S acceptor proteins. The sequence is that of Cysteine desulfurase IscS from Clostridium botulinum (strain ATCC 19397 / Type A).